Here is a 785-residue protein sequence, read N- to C-terminus: Endonuclease MutS2 (785 aa).

Residue 334 to 341 (GPNTGGKT) coordinates ATP. The 76-residue stretch at 710–785 (LDLRGYNVED…GVGATIAELK (76 aa)) folds into the Smr domain.

The protein belongs to the DNA mismatch repair MutS family. MutS2 subfamily. In terms of assembly, homodimer. Binds to stalled ribosomes, contacting rRNA.

Endonuclease that is involved in the suppression of homologous recombination and thus may have a key role in the control of bacterial genetic diversity. In terms of biological role, acts as a ribosome collision sensor, splitting the ribosome into its 2 subunits. Detects stalled/collided 70S ribosomes which it binds and splits by an ATP-hydrolysis driven conformational change. Acts upstream of the ribosome quality control system (RQC), a ribosome-associated complex that mediates the extraction of incompletely synthesized nascent chains from stalled ribosomes and their subsequent degradation. Probably generates substrates for RQC. In Brevibacillus brevis (strain 47 / JCM 6285 / NBRC 100599), this protein is Endonuclease MutS2.